The sequence spans 121 residues: Fumarate reductase subunit D (121 aa).

3 consecutive transmembrane segments (helical) span residues 22–42 (GVWF…LLPL), 57–77 (AFVS…LPMW), and 100–120 (YACY…VIQL).

It belongs to the FrdD family. In terms of assembly, part of an enzyme complex containing four subunits: a flavoprotein (FrdA), an iron-sulfur protein (FrdB), and two hydrophobic anchor proteins (FrdC and FrdD).

The protein resides in the cell inner membrane. Functionally, anchors the catalytic components of the fumarate reductase complex to the cell membrane, binds quinones. This chain is Fumarate reductase subunit D, found in Shewanella putrefaciens (strain CN-32 / ATCC BAA-453).